We begin with the raw amino-acid sequence, 389 residues long: Formate-dependent phosphoribosylglycinamide formyltransferase (389 aa).

N(1)-(5-phospho-beta-D-ribosyl)glycinamide contacts are provided by residues 15–16 and glutamate 75; that span reads EL. ATP is bound by residues arginine 107, lysine 148, 153–158, 188–191, and glutamate 196; these read SSGKGQ and EEFL. The 191-residue stretch at 112-302 folds into the ATP-grasp domain; it reads NLAAGELGLR…EFDLHLRAVL (191 aa). The Mg(2+) site is built by glutamate 261 and glutamate 273. N(1)-(5-phospho-beta-D-ribosyl)glycinamide contacts are provided by residues aspartate 280, lysine 350, and 357-358; that span reads RR.

This sequence belongs to the PurK/PurT family. As to quaternary structure, homodimer.

The enzyme catalyses N(1)-(5-phospho-beta-D-ribosyl)glycinamide + formate + ATP = N(2)-formyl-N(1)-(5-phospho-beta-D-ribosyl)glycinamide + ADP + phosphate + H(+). Its pathway is purine metabolism; IMP biosynthesis via de novo pathway; N(2)-formyl-N(1)-(5-phospho-D-ribosyl)glycinamide from N(1)-(5-phospho-D-ribosyl)glycinamide (formate route): step 1/1. In terms of biological role, involved in the de novo purine biosynthesis. Catalyzes the transfer of formate to 5-phospho-ribosyl-glycinamide (GAR), producing 5-phospho-ribosyl-N-formylglycinamide (FGAR). Formate is provided by PurU via hydrolysis of 10-formyl-tetrahydrofolate. The sequence is that of Formate-dependent phosphoribosylglycinamide formyltransferase from Synechococcus sp. (strain CC9311).